A 346-amino-acid chain; its full sequence is Elongation factor Ts (346 aa).

The interval 80-83 (TDFV) is involved in Mg(2+) ion dislocation from EF-Tu.

Belongs to the EF-Ts family.

Its subcellular location is the cytoplasm. Its function is as follows. Associates with the EF-Tu.GDP complex and induces the exchange of GDP to GTP. It remains bound to the aminoacyl-tRNA.EF-Tu.GTP complex up to the GTP hydrolysis stage on the ribosome. The polypeptide is Elongation factor Ts (Streptococcus uberis (strain ATCC BAA-854 / 0140J)).